The sequence spans 461 residues: Phosphomethylpyrimidine synthase (461 aa).

Residues Asn80, Met109, Tyr139, His174, 194-196 (SRG), 235-238 (DSLR), and Glu274 each bind substrate. A Zn(2+)-binding site is contributed by His278. Residue Tyr301 coordinates substrate. His342 is a binding site for Zn(2+). Residues Cys422, Cys425, and Cys430 each contribute to the [4Fe-4S] cluster site.

Belongs to the ThiC family. Homodimer. [4Fe-4S] cluster serves as cofactor.

The enzyme catalyses 5-amino-1-(5-phospho-beta-D-ribosyl)imidazole + S-adenosyl-L-methionine = 4-amino-2-methyl-5-(phosphooxymethyl)pyrimidine + CO + 5'-deoxyadenosine + formate + L-methionine + 3 H(+). The protein operates within cofactor biosynthesis; thiamine diphosphate biosynthesis. Its function is as follows. Catalyzes the synthesis of the hydroxymethylpyrimidine phosphate (HMP-P) moiety of thiamine from aminoimidazole ribotide (AIR) in a radical S-adenosyl-L-methionine (SAM)-dependent reaction. The sequence is that of Phosphomethylpyrimidine synthase from Nautilia profundicola (strain ATCC BAA-1463 / DSM 18972 / AmH).